The chain runs to 277 residues: Carbonyl reductase [NADPH] 1 (277 aa).

Residues 10–34 (VTGS…GEVV), 63–64 (DI), and asparagine 90 each bind NADP(+). Serine 30 carries the post-translational modification Phosphoserine. Glutathione is bound by residues 95–97 (FKV) and glutamine 106. Serine 140 lines the substrate pocket. 193-194 (AY) provides a ligand contact to glutathione. Catalysis depends on tyrosine 194, which acts as the Proton acceptor. Residues 194–198 (YGVTK) and 231–233 (VRT) contribute to the NADP(+) site.

It belongs to the short-chain dehydrogenases/reductases (SDR) family. As to quaternary structure, monomer.

The protein resides in the cytoplasm. The enzyme catalyses a secondary alcohol + NADP(+) = a ketone + NADPH + H(+). It catalyses the reaction prostaglandin F2alpha + NADP(+) = prostaglandin E2 + NADPH + H(+). It carries out the reaction prostaglandin E1 + NADP(+) = 15-oxoprostaglandin E1 + NADPH + H(+). The catalysed reaction is prostaglandin D2 + NADP(+) = 15-oxoprostaglandin D2 + NADPH + H(+). The enzyme catalyses menadione + NADPH + H(+) = menadiol + NADP(+). It catalyses the reaction prostaglandin E2 + NADP(+) = 15-oxoprostaglandin E2 + NADPH + H(+). It carries out the reaction prostaglandin F2alpha + NADP(+) = 15-oxoprostaglandin F2alpha + NADPH + H(+). The catalysed reaction is daunorubicin + NADPH + H(+) = 13-dihydrodaunorubicin + NADP(+). The enzyme catalyses S-nitrosoglutathione + NADPH + H(+) = S-(hydroxysulfenamide)glutathione + NADP(+). It catalyses the reaction a primary alcohol + NADP(+) = an aldehyde + NADPH + H(+). It carries out the reaction cortisol + NADPH + H(+) = 20beta-dihydrocortisol + NADP(+). The catalysed reaction is corticosterone + NADPH + H(+) = 20beta-dihydrocorticosterone + NADP(+). NADPH-dependent reductase with broad substrate specificity. Catalyzes the reduction of a wide variety of carbonyl compounds including quinones, prostaglandins, menadione, plus various xenobiotics. Catalyzes the reduction of the antitumor anthracyclines doxorubicin and daunorubicin to the cardiotoxic compounds doxorubicinol and daunorubicinol. Can convert prostaglandin E to prostaglandin F2-alpha. Can bind glutathione, which explains its higher affinity for glutathione-conjugated substrates. Catalyzes the reduction of S-nitrosoglutathione. In addition, participates in the glucocorticoid metabolism by catalyzing the NADPH-dependent cortisol/corticosterone into 20beta-dihydrocortisol (20b-DHF) or 20beta-corticosterone (20b-DHB), which are weak agonists of NR3C1 and NR3C2 in adipose tissue. In Macaca fascicularis (Crab-eating macaque), this protein is Carbonyl reductase [NADPH] 1.